We begin with the raw amino-acid sequence, 144 residues long: MNFKYIVAVSFLIASAYARSEENDEQSLSQRDVLEEESLREIRGIGAKILGGVKTALKGALKELASTYVNGKRTAEDHEVMKRLEAVMRDLDSLDYPEEAAERETRGFNQEEIANLFTKKEKRILGPVIKTIGGVLGGLLKNLG.

An N-terminal signal peptide occupies residues M1–A18. Residues R19–R43 constitute a propeptide that is removed on maturation. N70 is subject to Asparagine amide. Positions T74–R123 are excised as a propeptide. Position 143 is a leucine amide (L143).

Belongs to the bombinin family. Expressed by the skin glands.

The protein localises to the secreted. Maximin-7 shows antimicrobial activity against bacteria and against the fungus C.albicans. It has little hemolytic activity. Functionally, maximin-H13 shows antimicrobial activity against bacteria and against the fungus C.albicans. Shows strong hemolytic activity. The protein is Maximins 7/H13 of Bombina maxima (Giant fire-bellied toad).